The sequence spans 121 residues: Spermidine export protein MdtJ (121 aa).

Position 1 (methionine 1) is a topological domain, cytoplasmic. Residues 2–22 (YIYWILLGLAVATEITGTLSM) form a helical membrane-spanning segment. At 23-31 (KWASVSEGN) the chain is on the periplasmic side. A helical membrane pass occupies residues 32–52 (GGFILMLVMISLSYIFLSFAV). Residues 53–54 (KK) lie on the Cytoplasmic side of the membrane. Residues 55–75 (IALGVAYALWEGIGILFITLF) form a helical membrane-spanning segment. The Periplasmic segment spans residues 76–81 (SVLLFD). The chain crosses the membrane as a helical span at residues 82–102 (ESLSLMKIAGLTTLVAGIVLI). Residues 103 to 121 (KSGTRKARKPELEVNHGAV) are Cytoplasmic-facing.

Belongs to the drug/metabolite transporter (DMT) superfamily. Small multidrug resistance (SMR) (TC 2.A.7.1) family. MdtJ subfamily. Forms a complex with MdtI.

It is found in the cell inner membrane. Catalyzes the excretion of spermidine. The protein is Spermidine export protein MdtJ (mdtJ) of Escherichia coli O6:H1 (strain CFT073 / ATCC 700928 / UPEC).